The following is a 354-amino-acid chain: Cysteine proteinase A (354 aa).

Positions 1–24 (MARRNPLLFAIVVTILFVVCYGSA) are cleaved as a signal peptide. Residues 25-125 (LIAQTPPPVD…HKEDVHVDDS (101 aa)) constitute a propeptide, activation peptide. Disulfide bonds link cysteine 150-cysteine 191, cysteine 184-cysteine 229, and cysteine 282-cysteine 330. The active site involves cysteine 153. A glycan (N-linked (GlcNAc...) asparagine) is linked at asparagine 208. Active-site residues include histidine 289 and asparagine 309.

It belongs to the peptidase C1 family.

The sequence is that of Cysteine proteinase A (LMCPA) from Leishmania mexicana.